The primary structure comprises 96 residues: Muconolactone Delta-isomerase 1 (96 aa).

The protein belongs to the muconolactone Delta-isomerase family. Homodecamer.

It catalyses the reaction (S)-muconolactone = (4,5-dihydro-5-oxofuran-2-yl)-acetate. Its pathway is aromatic compound metabolism; beta-ketoadipate pathway; 5-oxo-4,5-dihydro-2-furylacetate from catechol: step 3/3. In Acinetobacter lwoffii, this protein is Muconolactone Delta-isomerase 1 (catC1).